The primary structure comprises 70 residues: Large ribosomal subunit protein bL31 (70 aa).

Zn(2+)-binding residues include C16, C18, C37, and C40.

This sequence belongs to the bacterial ribosomal protein bL31 family. Type A subfamily. As to quaternary structure, part of the 50S ribosomal subunit. Zn(2+) is required as a cofactor.

Binds the 23S rRNA. The polypeptide is Large ribosomal subunit protein bL31 (Shewanella sp. (strain MR-4)).